The following is a 725-amino-acid chain: Beta-adducin (725 aa).

The tract at residues Met-1–Asp-22 is disordered. Residues Ser-11 and Ser-25 each carry the phosphoserine modification. At Thr-55 the chain carries Phosphothreonine. 2 positions are modified to phosphoserine: Ser-60 and Ser-344. The tract at residues Lys-425–Asn-444 is interaction with calmodulin. The disordered stretch occupies residues Ala-525–Ser-725. Residues Ser-530 and Ser-532 each carry the phosphoserine modification. Thr-533 carries the post-translational modification Phosphothreonine. The residue at position 535 (Ser-535) is a Phosphoserine. At Thr-561 the chain carries Phosphothreonine. A compositionally biased stretch (basic and acidic residues) spans Glu-566–Thr-589. Residues Ser-594, Ser-598, Ser-602, and Ser-606 each carry the phosphoserine modification. Residues Val-596 to Lys-621 show a composition bias toward polar residues. The residue at position 612 (Thr-612) is a Phosphothreonine. A phosphoserine mark is found at Ser-614, Ser-618, and Ser-620. Positions Thr-622–Val-631 are enriched in basic and acidic residues. Position 674 is a phosphothreonine (Thr-674). Residues Ser-678, Ser-685, Ser-688, Ser-692, Ser-696, Ser-698, Ser-700, Ser-702, and Ser-712 each carry the phosphoserine modification. Residues Thr-687 to Ser-700 are compositionally biased toward low complexity. Over residues Pro-701 to Ser-725 the composition is skewed to basic residues. Positions Lys-703 to Lys-720 are interaction with calmodulin.

It belongs to the aldolase class II family. Adducin subfamily. Found in a complex with ADD2, DMTN and SLC2A1. Interacts with SLC2A1. Heterodimer of an alpha and a beta subunit.

The protein localises to the cytoplasm. Its subcellular location is the cytoskeleton. The protein resides in the cell membrane. Its function is as follows. Membrane-cytoskeleton-associated protein that promotes the assembly of the spectrin-actin network. Binds to the erythrocyte membrane receptor SLC2A1/GLUT1 and may therefore provide a link between the spectrin cytoskeleton to the plasma membrane. Binds to calmodulin. Calmodulin binds preferentially to the beta subunit. This chain is Beta-adducin (Add2), found in Mus musculus (Mouse).